A 251-amino-acid chain; its full sequence is Auxin-responsive protein IAA29 (251 aa).

Positions 3-7 (LDLGL) match the EAR-like (transcriptional repression) motif. In terms of domain architecture, PB1 spans 159–246 (SMYVKVKMDG…SIIRDRPCAY (88 aa)).

This sequence belongs to the Aux/IAA family. As to quaternary structure, homodimers and heterodimers.

It is found in the nucleus. Aux/IAA proteins are short-lived transcriptional factors that function as repressors of early auxin response genes at low auxin concentrations. Repression is thought to result from the interaction with auxin response factors (ARFs), proteins that bind to the auxin-responsive promoter element (AuxRE). Formation of heterodimers with ARF proteins may alter their ability to modulate early auxin response genes expression. The sequence is that of Auxin-responsive protein IAA29 (IAA29) from Arabidopsis thaliana (Mouse-ear cress).